The primary structure comprises 147 residues: Hemoglobin subunit delta (147 aa).

The Globin domain maps to 3–147; sequence HLTPEEKALV…VANALAHKYH (145 aa). Serine 51 carries the phosphoserine modification. Residues histidine 64 and histidine 93 each coordinate heme b.

The protein belongs to the globin family. In terms of assembly, heterotetramer of two delta chains and two alpha chains. Red blood cells.

This chain is Hemoglobin subunit delta (HBD), found in Trichechus manatus (Caribbean manatee).